The sequence spans 497 residues: Taxane 10-beta-hydroxylase (497 aa).

Residue C443 coordinates heme.

Belongs to the cytochrome P450 family. Requires heme as cofactor.

It carries out the reaction taxa-4(20),11-dien-5alpha-yl acetate + reduced [NADPH--hemoprotein reductase] + O2 = 10beta-hydroxytaxa-4(20),11-dien-5alpha-yl acetate + oxidized [NADPH--hemoprotein reductase] + H2O + H(+). The protein operates within alkaloid biosynthesis; taxol biosynthesis; 10-deacetyl-2-debenzoylbaccatin III from taxa-4(20),11-dien-5alpha-ol: step 2/3. In terms of biological role, involved in the transformation of a taxadienyl acetate by hydroxylation at C10 to yield taxadien-5-alpha-acetoxy-10-beta-ol. The polypeptide is Taxane 10-beta-hydroxylase (CYP725A1) (Taxus cuspidata (Japanese yew)).